A 221-amino-acid polypeptide reads, in one-letter code: GTP cyclohydrolase 1 (221 aa).

Zn(2+) is bound by residues cysteine 109, histidine 112, and cysteine 180.

The protein belongs to the GTP cyclohydrolase I family. In terms of assembly, toroid-shaped homodecamer, composed of two pentamers of five dimers.

It carries out the reaction GTP + H2O = 7,8-dihydroneopterin 3'-triphosphate + formate + H(+). The protein operates within cofactor biosynthesis; 7,8-dihydroneopterin triphosphate biosynthesis; 7,8-dihydroneopterin triphosphate from GTP: step 1/1. This chain is GTP cyclohydrolase 1, found in Blochmanniella pennsylvanica (strain BPEN).